A 443-amino-acid polypeptide reads, in one-letter code: Protoheme IX farnesyltransferase, mitochondrial (443 aa).

A disordered region spans residues 68–113; the sequence is LSQRVKPKPEPPASPFLEHTSSGQARADEDELPSFPAPSRPLSRKP. The next 7 membrane-spanning stretches (helical) occupy residues 174–194, 230–250, 252–272, 286–306, 308–328, 363–383, and 410–430; these read AGFA…TSLG, ISPL…VALL, WGVN…YTCC, VGAV…TGSL, AGAL…FNAL, LIAL…FPVI, and LFFC…TCKQ.

This sequence belongs to the UbiA prenyltransferase family.

It localises to the mitochondrion membrane. The enzyme catalyses heme b + (2E,6E)-farnesyl diphosphate + H2O = Fe(II)-heme o + diphosphate. In terms of biological role, converts protoheme IX and farnesyl diphosphate to heme O. The polypeptide is Protoheme IX farnesyltransferase, mitochondrial (Cox10) (Mus musculus (Mouse)).